The sequence spans 156 residues: ATP synthase subunit b (156 aa).

The helical transmembrane segment at 7–27 (LFAQLVVFFILAWFTMKFVWP) threads the bilayer.

This sequence belongs to the ATPase B chain family. F-type ATPases have 2 components, F(1) - the catalytic core - and F(0) - the membrane proton channel. F(1) has five subunits: alpha(3), beta(3), gamma(1), delta(1), epsilon(1). F(0) has four main subunits: a(1), b(2) and c(10-14). The alpha and beta chains form an alternating ring which encloses part of the gamma chain. F(1) is attached to F(0) by a central stalk formed by the gamma and epsilon chains, while a peripheral stalk is formed by the delta and b chains.

Its subcellular location is the cell inner membrane. Its function is as follows. F(1)F(0) ATP synthase produces ATP from ADP in the presence of a proton or sodium gradient. F-type ATPases consist of two structural domains, F(1) containing the extramembraneous catalytic core and F(0) containing the membrane proton channel, linked together by a central stalk and a peripheral stalk. During catalysis, ATP synthesis in the catalytic domain of F(1) is coupled via a rotary mechanism of the central stalk subunits to proton translocation. In terms of biological role, component of the F(0) channel, it forms part of the peripheral stalk, linking F(1) to F(0). The chain is ATP synthase subunit b from Methylibium petroleiphilum (strain ATCC BAA-1232 / LMG 22953 / PM1).